The chain runs to 172 residues: Iron-sulfur cluster assembly protein SufA (172 aa).

A signal peptide spans 1-19 (MFINIFLFLFAATINISSS). Positions 96, 164, and 166 each coordinate [4Fe-4S] cluster.

It belongs to the HesB/IscA family. Homodimer.

Its subcellular location is the plastid. The protein localises to the apicoplast. Its pathway is cofactor biosynthesis; iron-sulfur cluster biosynthesis. Functionally, participates in the sulfur mobilization (SUF) pathway for iron-sulfur (Fe-S) cluster biogenesis. Involved in the pre-assembly of [4Fe-4S] clusters and their transfer to target proteins. The protein is Iron-sulfur cluster assembly protein SufA of Plasmodium berghei (strain Anka).